A 262-amino-acid chain; its full sequence is MQTIIRVEKLAKTFNQHQALHAVDLNIHHSEMVALLGPSGSGKSTLLRHLSGLITGDKSAGSHIELLGRTVQREGRLARDIRKSRANTGYIFQQFNLVNRLSVLENVLIGALGSTPFWRTCFSWFTGEQKQRALQALTRVGMVHFAHQRVSTLSGGQQQRVAIARALMQQAKVILADEPIASLDPESARIVMDTLRDINQNDGITVVVTLHQVDYALRYCERIVALRQGHVFYDGSSQLFDNERFDHLYRSINRIEENAKAA.

One can recognise an ABC transporter domain in the interval 5–253; it reads IRVEKLAKTF…RFDHLYRSIN (249 aa). Position 37–44 (37–44) interacts with ATP; sequence GPSGSGKS.

The protein belongs to the ABC transporter superfamily. Phosphonates importer (TC 3.A.1.9.1) family. In terms of assembly, the complex is composed of two ATP-binding proteins (PhnC), two transmembrane proteins (PhnE) and a solute-binding protein (PhnD).

It localises to the cell inner membrane. The enzyme catalyses phosphonate(out) + ATP + H2O = phosphonate(in) + ADP + phosphate + H(+). In terms of biological role, part of the ABC transporter complex PhnCDE involved in phosphonates import. Responsible for energy coupling to the transport system. This Shigella flexneri serotype 5b (strain 8401) protein is Phosphonates import ATP-binding protein PhnC.